The following is a 726-amino-acid chain: Dipeptidyl-peptidase 5 (726 aa).

The N-terminal stretch at 1 to 19 (MAAAKWLIASLAFASSGLA) is a signal peptide. N-linked (GlcNAc...) asparagine glycosylation is found at asparagine 96 and asparagine 252. The interval 269–291 (AEPINKRNGPRTPQGIEGASSSP) is disordered. The Charge relay system role is filled by serine 558. Asparagine 605 carries N-linked (GlcNAc...) asparagine glycosylation. Residues aspartate 641 and histidine 673 each act as charge relay system in the active site. Asparagine 699 carries N-linked (GlcNAc...) asparagine glycosylation.

Belongs to the peptidase S9C family.

The protein resides in the secreted. This is Dipeptidyl-peptidase 5 (DPPV) from Arthroderma benhamiae (Trichophyton mentagrophytes).